Consider the following 71-residue polypeptide: Long neurotoxin Tx-NM3-1 (71 aa).

Cystine bridges form between Cys3-Cys20, Cys14-Cys41, Cys26-Cys30, Cys45-Cys56, and Cys57-Cys62.

As to expression, expressed by the venom gland.

It localises to the secreted. In terms of biological role, binds with high affinity to muscular (alpha-1-beta-1-gamma-delta/CHRNA1-CHRNB1-CHRNG-CHRND) and neuronal (alpha-7/CHRNA7) nicotinic acetylcholine receptor (nAChR) and inhibits acetylcholine from binding to the receptor, thereby impairing neuromuscular and neuronal transmission. Ranges of nAChR inhibition are in nanomolar (competitive binding with alpha-bungarotoxin gives Ki=1.66 nM on muscle nAChR and Ki=4.84 nM on alpha-7). Also shows moderate inhibition on GABA(A) alpha-1-beta-3-gamma-2 receptor (GABRA1-GABRB3-GABRG2) (IC(50)=0.68 uM), and a lower inhibition on alpha-1-beta-2-gamma-2 (GABRA1-GABRB2-GABRG2) and alpha-3-beta-2-gamma-2 (GABRA3-GABRB2-GABRG2). The protein is Long neurotoxin Tx-NM3-1 of Naja melanoleuca (Forest cobra).